The following is a 553-amino-acid chain: Hydroxylamine reductase (553 aa).

Cys3, Cys6, Cys18, and Cys25 together coordinate [2Fe-2S] cluster. Hybrid [4Fe-2O-2S] cluster-binding residues include His252, Glu276, Cys320, Cys408, Cys436, Cys461, Glu495, and Lys497. Cysteine persulfide is present on Cys408.

This sequence belongs to the HCP family. Requires [2Fe-2S] cluster as cofactor. It depends on hybrid [4Fe-2O-2S] cluster as a cofactor.

The protein resides in the cytoplasm. The enzyme catalyses A + NH4(+) + H2O = hydroxylamine + AH2 + H(+). Catalyzes the reduction of hydroxylamine to form NH(3) and H(2)O. This Vibrio vulnificus (strain YJ016) protein is Hydroxylamine reductase.